Here is a 246-residue protein sequence, read N- to C-terminus: Bis(5'-nucleosyl)-tetraphosphatase PrpE [asymmetrical] (246 aa).

It belongs to the PrpE family. Ni(2+) is required as a cofactor.

It carries out the reaction P(1),P(4)-bis(5'-guanosyl) tetraphosphate + H2O = GMP + GTP + 2 H(+). Functionally, asymmetrically hydrolyzes Ap4p to yield AMP and ATP. In Bacillus cereus (strain 03BB102), this protein is Bis(5'-nucleosyl)-tetraphosphatase PrpE [asymmetrical].